We begin with the raw amino-acid sequence, 470 residues long: Nuclear receptor ROR-beta (470 aa).

Residues 18–93 (VIPCKICGDK…LGMSRDAVKF (76 aa)) constitute a DNA-binding region (nuclear receptor). 2 NR C4-type zinc fingers span residues 21–41 (CKIC…CEGC) and 57–81 (CPRQ…LQKC). Positions 104-117 (LYAEVQKHQQRLQE) are enriched in basic and acidic residues. A disordered region spans residues 104–127 (LYAEVQKHQQRLQEQRQQQSGEAE). The 239-residue stretch at 222–460 (EIDRIAQNII…TLFPPLYKEL (239 aa)) folds into the NR LBD domain. Positions 456 to 461 (LYKELF) match the AF-2 motif.

The protein belongs to the nuclear hormone receptor family. NR1 subfamily. In terms of assembly, monomer. Interacts with CRX. Isoform 2 expressed with circadian rhythm in eye and pineal gland. Isoform 1 expressed in retina cortex, thalamus, and hypothalamus.

It localises to the nucleus. It is found in the nucleoplasm. Nuclear receptor that binds DNA as a monomer to ROR response elements (RORE) containing a single core motif half-site 5'-AGGTCA-3' preceded by a short A-T-rich sequence. Considered to have intrinsic transcriptional activity, have some natural ligands such as all-trans retinoic acid (ATRA) and other retinoids which act as inverse agonists repressing the transcriptional activity. Required for normal postnatal development of rod and cone photoreceptor cells. Modulates rod photoreceptors differentiation at least by inducing the transcription factor NRL-mediated pathway. In cone photoreceptor cells, regulates transcription of OPN1SW. Involved in the regulation of the period length and stability of the circadian rhythm. May control cytoarchitectural patterning of neocortical neurons during development. May act in a dose-dependent manner to regulate barrel formation upon innervation of layer IV neurons by thalamocortical axons. May play a role in the suppression of osteoblastic differentiation through the inhibition of RUNX2 transcriptional activity. Its function is as follows. Critical for hindlimb motor control and for the differentiation of amacrine and horizontal cells in the retina. Regulates the expression of PTF1A synergistically with FOXN4. This is Nuclear receptor ROR-beta (Rorb) from Rattus norvegicus (Rat).